We begin with the raw amino-acid sequence, 1019 residues long: Photoactivated adenylate cyclase subunit alpha-like protein 1224-5/1F (1019 aa).

The BLUF 1 domain occupies 55–148; it reads LRRLMYLSAS…GRMYGWWHLK (94 aa). One can recognise a Guanylate cyclase 1 domain in the interval 204–332; sequence VVTVIYLVEF…DWINSASRIT (129 aa). The 93-residue stretch at 467–559 folds into the BLUF 2 domain; sequence LITLTYISQA…GVYGSPLDMT (93 aa). Residues 615-744 enclose the Guanylate cyclase 2 domain; it reads VMLATAISSF…EVRARVLEVE (130 aa). The interval 825–863 is disordered; sequence NISCRGGNPPAGGIPTSPKVRPPGRTNSVSSYTPDPKQA.

Belongs to the adenylyl cyclase class-4/guanylyl cyclase family. Heterotetramer of two alpha and two beta subunits.

It localises to the cell projection. Its subcellular location is the cilium. The protein localises to the flagellum. In Euglena gracilis, this protein is Photoactivated adenylate cyclase subunit alpha-like protein 1224-5/1F.